Reading from the N-terminus, the 194-residue chain is Adenylate kinase (194 aa).

Residue 10 to 15 (GAGKGT) participates in ATP binding. The NMP stretch occupies residues 30–59 (STGDMLRAAVAQQSEIGKRAKAVMDAGQLV). Residues threonine 31, arginine 36, 57–59 (QLV), 85–88 (GYPR), and glutamine 92 each bind AMP. An LID region spans residues 126 to 142 (SRVAETIAKGGQVRSDD). Arginine 127 contributes to the ATP binding site. AMP is bound by residues arginine 139 and arginine 150. ATP is bound at residue alanine 178.

Belongs to the adenylate kinase family. As to quaternary structure, monomer.

It localises to the cytoplasm. The enzyme catalyses AMP + ATP = 2 ADP. It participates in purine metabolism; AMP biosynthesis via salvage pathway; AMP from ADP: step 1/1. Catalyzes the reversible transfer of the terminal phosphate group between ATP and AMP. Plays an important role in cellular energy homeostasis and in adenine nucleotide metabolism. This is Adenylate kinase from Brucella anthropi (strain ATCC 49188 / DSM 6882 / CCUG 24695 / JCM 21032 / LMG 3331 / NBRC 15819 / NCTC 12168 / Alc 37) (Ochrobactrum anthropi).